The primary structure comprises 370 residues: MQQDKVNLLGLNQKAIEDFFISIGEKKFHARQVFKWIHKKGVIDFDAMTDLGKNLRHKLKEKAQITIPKVVFSKASKDGTHKWLIDVGGSAVETVFIPEEGRGTLCVSSQVGCTLNCSFCSTGKQGFNRNLSAAEVIAQLWIAARTLSKTDGEHDFTVTNIVMMGMGEPLMNFENVVPAMDIMMDDLAYGLSRRKVTLSTSGVVPRIYDLLEQSGVSLAVSLHAPNDMLRNEIVPINKKYNIDELLEACKLYAQKGPHKHITFEYTLMEEVNDNLSDAEELVALLKSREVPAKINLIPFNPYPGTPYKKPSNNRIHRFKEFLQHNGFVTTVRKTRGDDIDAACGQLAGDVMDKTNRKQRYLKKLGDTNAN.

The Proton acceptor role is filled by Glu93. The 239-residue stretch at 99–337 (EEGRGTLCVS…VTTVRKTRGD (239 aa)) folds into the Radical SAM core domain. Residues Cys106 and Cys343 are joined by a disulfide bond. [4Fe-4S] cluster-binding residues include Cys113, Cys117, and Cys120. Residues 167-168 (GE), Ser199, 221-223 (SLH), and Asn300 contribute to the S-adenosyl-L-methionine site. The active-site S-methylcysteine intermediate is the Cys343.

It belongs to the radical SAM superfamily. RlmN family. It depends on [4Fe-4S] cluster as a cofactor.

Its subcellular location is the cytoplasm. The enzyme catalyses adenosine(2503) in 23S rRNA + 2 reduced [2Fe-2S]-[ferredoxin] + 2 S-adenosyl-L-methionine = 2-methyladenosine(2503) in 23S rRNA + 5'-deoxyadenosine + L-methionine + 2 oxidized [2Fe-2S]-[ferredoxin] + S-adenosyl-L-homocysteine. It catalyses the reaction adenosine(37) in tRNA + 2 reduced [2Fe-2S]-[ferredoxin] + 2 S-adenosyl-L-methionine = 2-methyladenosine(37) in tRNA + 5'-deoxyadenosine + L-methionine + 2 oxidized [2Fe-2S]-[ferredoxin] + S-adenosyl-L-homocysteine. Specifically methylates position 2 of adenine 2503 in 23S rRNA and position 2 of adenine 37 in tRNAs. m2A2503 modification seems to play a crucial role in the proofreading step occurring at the peptidyl transferase center and thus would serve to optimize ribosomal fidelity. The protein is Dual-specificity RNA methyltransferase RlmN of Francisella tularensis subsp. novicida (strain U112).